The primary structure comprises 317 residues: tRNA dimethylallyltransferase (317 aa).

An ATP-binding site is contributed by 14-21 (GPTAVGKT). 16–21 (TAVGKT) contributes to the substrate binding site. An interaction with substrate tRNA region spans residues 39 to 42 (DSMQ).

This sequence belongs to the IPP transferase family. As to quaternary structure, monomer. It depends on Mg(2+) as a cofactor.

The enzyme catalyses adenosine(37) in tRNA + dimethylallyl diphosphate = N(6)-dimethylallyladenosine(37) in tRNA + diphosphate. In terms of biological role, catalyzes the transfer of a dimethylallyl group onto the adenine at position 37 in tRNAs that read codons beginning with uridine, leading to the formation of N6-(dimethylallyl)adenosine (i(6)A). The protein is tRNA dimethylallyltransferase of Bacillus cereus (strain AH820).